The following is a 669-amino-acid chain: Armadillo repeat-containing protein gudu (669 aa).

The segment covering 1–10 has biased composition (polar residues); it reads MIGTSSGTSH. Residues 1 to 53 are disordered; sequence MIGTSSGTSHNRSRKKKEQCGSCPNRFSKDKRQVAAEDSDTTEVESSTDEEER. Residues 37 to 51 show a composition bias toward acidic residues; it reads EDSDTTEVESSTDEE. ARM repeat units follow at residues 100 to 139, 141 to 180, 240 to 279, 281 to 320, 322 to 365, 367 to 406, 408 to 447, 492 to 531, 574 to 613, and 615 to 654; these read QINQ…DITL, IDIR…NVCK, KHNM…KCSS, PKFQ…KCAF, GTTR…MCAV, DANV…ECVR, QSNR…ECAE, DSAE…TIAQ, GNNT…KLSM, and PQNC…NIRE.

In terms of tissue distribution, highly expressed in testis.

Important for spermatogenesis where it may have a role in sperm individualization. The polypeptide is Armadillo repeat-containing protein gudu (Drosophila melanogaster (Fruit fly)).